The following is a 760-amino-acid chain: Phosphatidylinositol N-acetylglucosaminyltransferase subunit Q (760 aa).

The next 5 helical transmembrane spans lie at 278–298 (TVAS…WLHG), 349–371 (LYHI…HILW), 378–400 (CLGL…FHIY), 446–468 (LFIG…LYYL), and 475–497 (LLVV…LPLY). The tract at residues 696 to 748 (LAVGVEGPCQDEPPSPRHPLAPSAEQHPASGGLKQSLTPVPSGPGPSLPEPHG) is disordered.

The protein belongs to the PIGQ family. In terms of assembly, component of the glycosylphosphatidylinositol-N-acetylglucosaminyltransferase (GPI-GnT) complex composed at least by PIGA, PIGC, PIGH, PIGP, PIGQ, PIGY and DPM2. Interacts with PIGA, PIGH and PIGC.

The protein resides in the membrane. It participates in glycolipid biosynthesis; glycosylphosphatidylinositol-anchor biosynthesis. In terms of biological role, part of the glycosylphosphatidylinositol-N-acetylglucosaminyltransferase (GPI-GnT) complex that catalyzes the transfer of N-acetylglucosamine from UDP-N-acetylglucosamine to phosphatidylinositol and participates in the first step of GPI biosynthesis. The polypeptide is Phosphatidylinositol N-acetylglucosaminyltransferase subunit Q (Homo sapiens (Human)).